The chain runs to 116 residues: L-amino-acid oxidase BjussuLAAO-II (116 aa).

42 to 45 (GPMR) is an FAD binding site. Residues R45 and H78 each contribute to the substrate site.

The protein belongs to the flavin monoamine oxidase family. FIG1 subfamily. Homodimer; non-covalently linked. FAD is required as a cofactor. Post-translationally, glycosylated. Expressed by the venom gland.

The protein localises to the secreted. The catalysed reaction is an L-alpha-amino acid + O2 + H2O = a 2-oxocarboxylate + H2O2 + NH4(+). The enzyme catalyses L-leucine + O2 + H2O = 4-methyl-2-oxopentanoate + H2O2 + NH4(+). It carries out the reaction L-phenylalanine + O2 + H2O = 3-phenylpyruvate + H2O2 + NH4(+). It catalyses the reaction L-methionine + O2 + H2O = 4-methylsulfanyl-2-oxobutanoate + H2O2 + NH4(+). The catalysed reaction is L-isoleucine + O2 + H2O = (S)-3-methyl-2-oxopentanoate + H2O2 + NH4(+). The enzyme catalyses L-histidine + O2 + H2O = 3-(imidazol-5-yl)pyruvate + H2O2 + NH4(+). It carries out the reaction L-tyrosine + O2 + H2O = 3-(4-hydroxyphenyl)pyruvate + H2O2 + NH4(+). It catalyses the reaction L-tryptophan + O2 + H2O = indole-3-pyruvate + H2O2 + NH4(+). With respect to regulation, its enzymatic activities is reduced by the presence of Zn(2+), Al(3+), Cu(2+), Na(+) or Ni(2+) salts. Its function is as follows. Catalyzes an oxidative deamination of predominantly hydrophobic and aromatic L-amino acids, thus producing hydrogen peroxide that may contribute to the diverse toxic effects of this enzyme. Shows very high enzymatic activity on L-Met and L-Leu, high activity on L-Ile, L-Phe and L-Tyr and moderate activity on L-His. Exhibits diverse biological activities, such as hemorrhage, hemolysis, edema, apoptosis of vascular endothelial cells or tumor cell lines, and antibacterial, as well as regulation of platelet aggregation. Effects of snake L-amino oxidases on platelets are controversial, since they either induce aggregation or inhibit agonist-induced aggregation. These different effects are probably due to different experimental conditions. In vitro, has a strong antiprotozoal effect against Leishmania amazonensis (IC(50)=4.56 ug/mL) and Trypanosoma cruzi (IC(50)=4.85 ug/mL). It also causes cell death and DNA damage in hepatocarcinoma cells (HepG2) in vitro by inducing oxidative stress. It exerts cytotoxicity towards colorectal adenocarcinomahuman cells (Caco-2) by acting on multiple intracellular targets. It diminishes cell viability by decreasing mitochondrial activity, the activity of acid phosphatases, and lysosomal function. In addition, it increases intracellular levels of reactive oxygen species and DNA damage, it elevates the expression of the pro-inflammatory cytokine genes TNF and IL6, and lowers the expression of the apoptotic-related genes. Also induces cytotoxicity (IC(50)=1.80 ug/mL) and apoptosis in MCF-7 cells (a human breast adeno-carcinoma cell line) by activating the intrinsic and extrinsic apoptosis pathways, but are not cytotoxic towards MCF-10A cells (a non-tumorigenic human breast epithelial cell line). This chain is L-amino-acid oxidase BjussuLAAO-II, found in Bothrops jararacussu (Jararacussu).